Reading from the N-terminus, the 508-residue chain is Photosystem II CP47 reaction center protein (508 aa).

6 consecutive transmembrane segments (helical) span residues 21–36 (SVHI…WAGS), 101–115 (IAFS…IWHW), 140–156 (GIHL…FGAF), 203–218 (IAAG…FHLS), 237–252 (VLSS…AFVV), and 457–472 (SFAL…HGAR).

This sequence belongs to the PsbB/PsbC family. PsbB subfamily. In terms of assembly, PSII is composed of 1 copy each of membrane proteins PsbA, PsbB, PsbC, PsbD, PsbE, PsbF, PsbH, PsbI, PsbJ, PsbK, PsbL, PsbM, PsbT, PsbX, PsbY, PsbZ, Psb30/Ycf12, at least 3 peripheral proteins of the oxygen-evolving complex and a large number of cofactors. It forms dimeric complexes. Binds multiple chlorophylls. PSII binds additional chlorophylls, carotenoids and specific lipids. serves as cofactor.

Its subcellular location is the plastid membrane. One of the components of the core complex of photosystem II (PSII). It binds chlorophyll and helps catalyze the primary light-induced photochemical processes of PSII. PSII is a light-driven water:plastoquinone oxidoreductase, using light energy to abstract electrons from H(2)O, generating O(2) and a proton gradient subsequently used for ATP formation. The chain is Photosystem II CP47 reaction center protein from Cuscuta reflexa (Southern Asian dodder).